Reading from the N-terminus, the 719-residue chain is DNA ligase (719 aa).

NAD(+) is bound by residues 42–46, 92–93, and E126; these read DAAYD and SL. K128 functions as the N6-AMP-lysine intermediate in the catalytic mechanism. NAD(+) contacts are provided by R149, E185, K301, and K325. The Zn(2+) site is built by C430, C433, C448, and C454. In terms of domain architecture, BRCT spans 640–719; the sequence is ATGSPVEGKT…DDWFKLVGED (80 aa).

It belongs to the NAD-dependent DNA ligase family. LigA subfamily. It depends on Mg(2+) as a cofactor. Mn(2+) is required as a cofactor.

The enzyme catalyses NAD(+) + (deoxyribonucleotide)n-3'-hydroxyl + 5'-phospho-(deoxyribonucleotide)m = (deoxyribonucleotide)n+m + AMP + beta-nicotinamide D-nucleotide.. DNA ligase that catalyzes the formation of phosphodiester linkages between 5'-phosphoryl and 3'-hydroxyl groups in double-stranded DNA using NAD as a coenzyme and as the energy source for the reaction. It is essential for DNA replication and repair of damaged DNA. This is DNA ligase from Brucella melitensis biotype 2 (strain ATCC 23457).